We begin with the raw amino-acid sequence, 391 residues long: MAIINMTDLDLTNKRVLIRQDLNVPVSDGMVTSDARLRASLPTIQLALDKGAAVMVMSHLGRPTEGEFNNEFSLQPVVDYLAKALKSPVRLATDYLDGVEANVGEVVVFENVRFNQGEGKNDEALSKKMAALCDVYVMDAFGTAHRAQASTHGVGMFAPIACAGPLLAQELDALGKALDNPARPMVAIVGGSKVSTKLTVLESLSGIVDQLVVGGGIANTFIAAAGFNVGKSLYEADLVDEAKRLVANARSRGGDIPVPTDVVVASEFSPTAAAKLVDVSQVSDTDMIFDIGPDSAEALAKIIETAGTIVWNGPVGVFEFDQFGKGTERIARAIADSKAFSIAGGGDTLAAVDKYNIADKVSYISTGGGAFLEFLEGKELPAVAMLEKRGA.

Residues aspartate 21 to asparagine 23, arginine 36, histidine 59 to arginine 62, arginine 113, and arginine 146 contribute to the substrate site. Residues lysine 197, glutamate 319, and glycine 345–threonine 348 contribute to the ATP site.

The protein belongs to the phosphoglycerate kinase family. In terms of assembly, monomer.

It is found in the cytoplasm. The catalysed reaction is (2R)-3-phosphoglycerate + ATP = (2R)-3-phospho-glyceroyl phosphate + ADP. Its pathway is carbohydrate degradation; glycolysis; pyruvate from D-glyceraldehyde 3-phosphate: step 2/5. This Shewanella denitrificans (strain OS217 / ATCC BAA-1090 / DSM 15013) protein is Phosphoglycerate kinase.